The primary structure comprises 601 residues: Ribosomal oxygenase 1 (601 aa).

Residues 1–11 (MAACGAEERQR) show a composition bias toward basic and acidic residues. Positions 1–149 (MAACGAEERQ…PGGGGVPGLL (149 aa)) are disordered. Low complexity predominate over residues 61-70 (ERAAPPQGAA). Positions 73–87 (DRVERAGSSEAKQGD) are enriched in basic and acidic residues. Residues 254-399 (CSLRLLSPQA…DFLEKLLPAA (146 aa)) enclose the JmjC domain. Fe cation contacts are provided by H300, D302, and H365.

The protein belongs to the ROX family. NO66 subfamily. Fe(2+) is required as a cofactor.

Its subcellular location is the nucleus. It localises to the nucleolus. The protein resides in the nucleoplasm. The enzyme catalyses N(6),N(6)-dimethyl-L-lysyl(36)-[histone H3] + 2 2-oxoglutarate + 2 O2 = L-lysyl(36)-[histone H3] + 2 formaldehyde + 2 succinate + 2 CO2. It carries out the reaction N(6)-methyl-L-lysyl-[protein] + 2-oxoglutarate + O2 = L-lysyl-[protein] + formaldehyde + succinate + CO2. It catalyses the reaction L-histidyl-[protein] + 2-oxoglutarate + O2 = (3S)-3-hydroxy-L-histidyl-[protein] + succinate + CO2. In terms of biological role, oxygenase that can act as both a histone lysine demethylase and a ribosomal histidine hydroxylase. Specifically demethylates 'Lys-4' (H3K4me) and 'Lys-36' (H3K36me) of histone H3, thereby playing a central role in histone code. Preferentially demethylates trimethylated H3 'Lys-4' (H3K4me3) and monomethylated H3 'Lys-4' (H3K4me1) residues, while it has weaker activity for dimethylated H3 'Lys-36' (H3K36me2). Also catalyzes demethylation of non-histone proteins. Also catalyzes the hydroxylation of 60S ribosomal protein L8 on 'His-216', thereby playing a role in ribosome biogenesis. In Gallus gallus (Chicken), this protein is Ribosomal oxygenase 1 (RIOX1).